Reading from the N-terminus, the 158-residue chain is Transcription factor HY5 (158 aa).

The span at M1–A25 shows a compositional bias: low complexity. Residues M1 to E105 form a disordered region. The span at L26 to P44 shows a compositional bias: basic and acidic residues. The interval E35–M46 is interaction with COP1. Positions G47–G58 are enriched in low complexity. The 64-residue stretch at E86–T149 folds into the bZIP domain. A basic motif region spans residues K88–K108. The segment at L114 to L142 is leucine-zipper.

This sequence belongs to the bZIP family. In terms of assembly, interacts with COP1. Ubiquitinated by COP1. Ubiquitination takes place in darkness and leads to its subsequent degradation, thereby preventing to activate photomorphogenesis signals.

Its subcellular location is the nucleus. Transcription factor that promotes photomorphogenesis in the light and positively regulates fruit pigmentation and fruit nutritional quality. Probably acts downstream of the light receptor network and directly affects transcription of light-induced genes. The sequence is that of Transcription factor HY5 (HY5) from Solanum lycopersicum (Tomato).